A 233-amino-acid polypeptide reads, in one-letter code: MFFSLAAVEVGTHLYWEIGGLEVHGQVLLITWLVLAIILTLAILGTLKLEQVPKGVQNFLESVFEYVSGIAKDQIGEYHYRPWVPFVGTLFLFIFVANWLGALIPWKLIHLPEGELAAPTNDINTTVALSLLTSISYFYAGFKEKGLGFFARYISPTPIFLPINILEDFTKPLSLSFRLFGNILADEIVVSVLCLLVPLLIPLPVMVLGIFASSVQALVFSTLSAAYIGESIE.

The next 4 helical transmembrane spans lie at 27–47 (VLLITWLVLAIILTLAILGTL), 84–104 (VPFVGTLFLFIFVANWLGALI), 122–142 (DINTTVALSLLTSISYFYAGF), and 192–212 (VLCLLVPLLIPLPVMVLGIFA).

This sequence belongs to the ATPase A chain family. In terms of assembly, F-type ATPases have 2 components, CF(1) - the catalytic core - and CF(0) - the membrane proton channel. CF(1) has five subunits: alpha(3), beta(3), gamma(1), delta(1), epsilon(1). CF(0) has four main subunits: a, b, b' and c.

The protein localises to the plastid. It is found in the chloroplast thylakoid membrane. In terms of biological role, key component of the proton channel; it plays a direct role in the translocation of protons across the membrane. In Ochrosphaera neapolitana, this protein is ATP synthase subunit a, chloroplastic.